A 358-amino-acid chain; its full sequence is DNA replication and repair protein RecF (358 aa).

ATP is bound at residue Gly-30 to Thr-37.

The protein belongs to the RecF family.

The protein resides in the cytoplasm. The RecF protein is involved in DNA metabolism; it is required for DNA replication and normal SOS inducibility. RecF binds preferentially to single-stranded, linear DNA. It also seems to bind ATP. The sequence is that of DNA replication and repair protein RecF from Acinetobacter baylyi (strain ATCC 33305 / BD413 / ADP1).